The sequence spans 539 residues: Membrane protein insertase YidC (539 aa).

5 helical membrane-spanning segments follow: residues threonine 6 to alanine 26, serine 341 to valine 361, leucine 416 to leucine 436, leucine 454 to isoleucine 474, and proline 495 to valine 515.

This sequence belongs to the OXA1/ALB3/YidC family. Type 1 subfamily. As to quaternary structure, interacts with the Sec translocase complex via SecD. Specifically interacts with transmembrane segments of nascent integral membrane proteins during membrane integration.

The protein localises to the cell inner membrane. Its function is as follows. Required for the insertion and/or proper folding and/or complex formation of integral membrane proteins into the membrane. Involved in integration of membrane proteins that insert both dependently and independently of the Sec translocase complex, as well as at least some lipoproteins. Aids folding of multispanning membrane proteins. The protein is Membrane protein insertase YidC of Vibrio vulnificus (strain YJ016).